The following is an 82-amino-acid chain: ATP synthase subunit c (82 aa).

2 helical membrane-spanning segments follow: residues 3-23 and 57-77; these read PLIA…ASLG and LAFM…LLFA.

In terms of assembly, F-type ATPases have 2 components, F(1) - the catalytic core - and F(0) - the membrane proton channel. F(1) has five subunits: alpha(3), beta(3), gamma(1), delta(1), epsilon(1). F(0) has four main subunits: a(1), b(1), b'(1) and c(10-14). The alpha and beta chains form an alternating ring which encloses part of the gamma chain. F(1) is attached to F(0) by a central stalk formed by the gamma and epsilon chains, while a peripheral stalk is formed by the delta, b and b' chains.

It localises to the cellular thylakoid membrane. Inhibited by dicyclohexylcarbodiimide. Its function is as follows. F(1)F(0) ATP synthase produces ATP from ADP in the presence of a proton or sodium gradient. F-type ATPases consist of two structural domains, F(1) containing the extramembraneous catalytic core and F(0) containing the membrane proton channel, linked together by a central stalk and a peripheral stalk. During catalysis, ATP synthesis in the catalytic domain of F(1) is coupled via a rotary mechanism of the central stalk subunits to proton translocation. Key component of the F(0) channel; it plays a direct role in translocation across the membrane. A homomeric c-ring of between 10-14 subunits forms the central stalk rotor element with the F(1) delta and epsilon subunits. Functionally, the complex from the organism is particularly stable to disruption and remains functional after 6 hrs at 55 degrees Celsius. The chain is ATP synthase subunit c (atpE) from Thermosynechococcus vestitus (strain NIES-2133 / IAM M-273 / BP-1).